Consider the following 249-residue polypeptide: 15,16-dihydrobiliverdin:ferredoxin oxidoreductase (249 aa).

It belongs to the HY2 family.

It carries out the reaction 15,16-dihydrobiliverdin + oxidized 2[4Fe-4S]-[ferredoxin] = biliverdin IXalpha + reduced 2[4Fe-4S]-[ferredoxin] + 2 H(+). Its function is as follows. Catalyzes the two-electron reduction of biliverdin IX-alpha at the C15 methine bridge. This chain is 15,16-dihydrobiliverdin:ferredoxin oxidoreductase, found in Prochlorococcus marinus (strain MIT 9303).